We begin with the raw amino-acid sequence, 301 residues long: Possible hemolysin C (301 aa).

2 CBS domains span residues 79–141 and 144–201; these read MVPR…NFRL and LIRK…IDDE.

Belongs to the UPF0053 family. Hemolysin C subfamily.

The protein is Possible hemolysin C (tlyC) of Rickettsia bellii (strain RML369-C).